The chain runs to 390 residues: Tryptophan synthase beta chain (390 aa).

Lys90 is subject to N6-(pyridoxal phosphate)lysine.

The protein belongs to the TrpB family. In terms of assembly, tetramer of two alpha and two beta chains. It depends on pyridoxal 5'-phosphate as a cofactor.

It carries out the reaction (1S,2R)-1-C-(indol-3-yl)glycerol 3-phosphate + L-serine = D-glyceraldehyde 3-phosphate + L-tryptophan + H2O. It functions in the pathway amino-acid biosynthesis; L-tryptophan biosynthesis; L-tryptophan from chorismate: step 5/5. Its function is as follows. The beta subunit is responsible for the synthesis of L-tryptophan from indole and L-serine. The sequence is that of Tryptophan synthase beta chain from Bacteroides fragilis (strain ATCC 25285 / DSM 2151 / CCUG 4856 / JCM 11019 / LMG 10263 / NCTC 9343 / Onslow / VPI 2553 / EN-2).